Here is a 228-residue protein sequence, read N- to C-terminus: Lactate utilization protein A (228 aa).

This sequence belongs to the LutA/YkgE family.

Is involved in L-lactate degradation and allows cells to grow with lactate as the sole carbon source. This chain is Lactate utilization protein A, found in Lysinibacillus sphaericus (strain C3-41).